Here is a 1133-residue protein sequence, read N- to C-terminus: Envelopment polyprotein (1133 aa).

An N-terminal signal peptide occupies residues 1 to 16 (MWSLLLLAALVGQGFA). The Lumenal portion of the chain corresponds to 17-484 (LKNVFDMRIQ…PGFHGWATAA (468 aa)). Cystine bridges form between C61–C155, C107–C126, C131–C136, C173–C183, C208–C245, C232–C349, C374–C433, C378–C387, C403–C422, and C450–C473. N132 carries N-linked (GlcNAc...) asparagine; by host glycosylation. N-linked (GlcNAc...) asparagine; by host glycans are attached at residues N233 and N345. N397 is a glycosylation site (N-linked (GlcNAc...) asparagine; by host). Residues 485–504 (LLITFCFGWVLIPACTLAIL) form a helical membrane-spanning segment. Over 505–626 (LVLKFFANIL…NLFRYKSRCY (122 aa)) the chain is Cytoplasmic. A binding to the ribonucleoprotein region spans residues 514 to 531 (LHTSNQENRFKAILRKIK). 2 CCHC-type zinc fingers span residues 543 to 563 (CEIC…NLSC) and 568 to 589 (CPYC…YKVC). Binding to the ribonucleoprotein regions lie at residues 586–603 (YKVC…KKTV), 590–601 (QATHRFREDLKK), and 609–623 (GPGC…RYKS). The ITAM domain occupies 609 to 632 (GPGCYRTLNLFRYKSRCYILTMWT). The short motif at 613 to 616 (YRTL) is the YxxL element. A helical transmembrane segment spans residues 627–647 (ILTMWTLLLIIESILWAASAA). The Lumenal portion of the chain corresponds to 648–1105 (EIPLVPLWTD…VMGIINGNWV (458 aa)). Intrachain disulfides connect C733/C768, C737/C775, C749/C883, C763/C894, C778/C902, C804/C813, C821/C830, and C861/C865. A fusion loop region spans residues 755 to 775 (YEYENSWACNPPDCPGVGTGC). Residue N926 is glycosylated (N-linked (GlcNAc...) asparagine; by host). Cystine bridges form between C968-C998, C991-C1043, C1008-C1013, C1044-C1049, and C1083-C1087. Residues 1106–1125 (VLIVLCVLLLFSLILLSILC) form a helical membrane-spanning segment. The segment at 1120–1133 (LLSILCPVRKHKKS) is binding to the ribonucleoprotein. Over 1126 to 1133 (PVRKHKKS) the chain is Cytoplasmic.

It belongs to the hantavirus envelope glycoprotein family. In terms of assembly, homodimer. Homotetramer; forms heterotetrameric Gn-Gc spikes in the pre-fusion conformation. Interacts (via C-terminus) with the nucleoprotein. Interacts with host TUFM; this interaction contributes to the virus-induced degradation of mitochondria by autophagy, which leads to degradation of host MAVS and inhibition of type I interferon (IFN) responses. Interacts with host MAP1LC3B; this interaction contributes to the virus-induced degradation of mitochondria by autophagy, which leads to degradation of host MAVS and inhibition of type I interferon (IFN) responses. Homodimer. Homotetramer; forms heterotetrameric Gn-Gc spikes in the pre-fusion conformation. Homotrimer; forms homotrimer in the post-fusion conformation at acidic pH. Interacts (via C-terminus) with the nucleoprotein. Envelope polyprotein precursor is quickly cleaved in vivo just after synthesis, presumably by host signal peptidase.

The protein resides in the virion membrane. It is found in the host cell surface. It localises to the host Golgi apparatus membrane. The protein localises to the host endoplasmic reticulum membrane. Its subcellular location is the host mitochondrion. In terms of biological role, forms homotetramers with glycoprotein C at the surface of the virion. Attaches the virion to host cell receptors including integrin ITGAV/ITGB3. This attachment induces virion internalization predominantly through clathrin-dependent endocytosis. Mediates the assembly and budding of infectious virus particles through its interaction with the nucleocapsid protein and the viral genome. May dysregulate normal immune and endothelial cell responses through an ITAM motif. Translocates to mitochondria, binds to host TUFM and recruits MAP1LC3B. These interactions induce mitochondrial autophagy and therefore destruction of host MAVS leading to inhibition of type I interferon (IFN) responses. Concomitant breakdown of glycoprotein N is apparently prevented by the nucleoprotein that may inhibit Gn-stimulated autophagosome-lysosome fusion. Interacts with the viral genomic RNA. Its function is as follows. Forms homotetramers with glycoprotein N at the surface of the virion. Attaches the virion to host cell receptors including integrin ITGAV/ITGB3. This attachment induces virion internalization predominantly through clathrin-dependent endocytosis. Class II fusion protein that promotes fusion of viral membrane with host endosomal membrane after endocytosis of the virion. In Homo sapiens (Human), this protein is Envelopment polyprotein (GP).